Consider the following 145-residue polypeptide: Basic phospholipase A2 textilotoxin A chain (145 aa).

An N-terminal signal peptide occupies residues 1–19 (MHPAHLLVLLGVCVSLLGA). A propeptide spanning residues 20-27 (SDIPPLPL) is cleaved from the precursor. Intrachain disulfides connect Cys38–Cys98, Cys54–Cys144, Cys56–Cys72, Cys71–Cys125, Cys78–Cys118, Cys87–Cys111, and Cys105–Cys116. Tyr55, Gly57, and Gly59 together coordinate Ca(2+). His75 is an active-site residue. Asp76 serves as a coordination point for Ca(2+). Residue Asp119 is part of the active site.

Belongs to the phospholipase A2 family. Group I subfamily. D49 sub-subfamily. Heterohexamer. 2 forms exist: 2 A or 2 B chains, 2 C chains and 2 covalently-linked D chains, and 1 A or 1 B, 1 C, 2 covalently-linked D chains and 2 differentially glycosylated covalently-linked D chains. Textilotoxin was originally described as pentameric. Requires Ca(2+) as cofactor. In terms of tissue distribution, expressed by the venom gland.

The protein localises to the secreted. It carries out the reaction a 1,2-diacyl-sn-glycero-3-phosphocholine + H2O = a 1-acyl-sn-glycero-3-phosphocholine + a fatty acid + H(+). Its function is as follows. Snake venom oligomeric phospholipase A2 that has potent presynaptic neurotoxicity. Chain A possesses a very low toxicity, but is essential for neurotoxicity. Possesses a low enzymatic activity. PLA2 catalyzes the calcium-dependent hydrolysis of the 2-acyl groups in 3-sn-phosphoglycerides. The sequence is that of Basic phospholipase A2 textilotoxin A chain from Pseudonaja textilis (Eastern brown snake).